Reading from the N-terminus, the 278-residue chain is Protein irg-2 (278 aa).

Residues asparagine 152–serine 179 are disordered. Over residues glutamine 163–serine 179 the composition is skewed to polar residues.

In terms of biological role, plays a role in innate immunity by conferring resistance to virulent strains of the Gram-negative bacterium P.aeruginosa via the zip-2 pathway and independent of the pmk-1 p38MAPK pathway. Induced as part of several immune responses to translational inhibition arising from endocytosis of ToxA during P.aeruginosa infection or exposure to exogenous cycloheximide. This chain is Protein irg-2, found in Caenorhabditis elegans.